A 528-amino-acid chain; its full sequence is Phosphoenolpyruvate carboxykinase (ATP) (528 aa).

Residues Arg56, Tyr192, and Lys198 each coordinate substrate. Residues Lys198, His217, and 233-241 (GLSGTGKTT) each bind ATP. Residues Lys198 and His217 each coordinate Mn(2+). Asp254 contributes to the Mn(2+) binding site. Positions 282, 319, and 444 each coordinate ATP. Residue Arg319 participates in substrate binding.

The protein belongs to the phosphoenolpyruvate carboxykinase (ATP) family. Requires Mn(2+) as cofactor.

The protein localises to the cytoplasm. The catalysed reaction is oxaloacetate + ATP = phosphoenolpyruvate + ADP + CO2. Its pathway is carbohydrate biosynthesis; gluconeogenesis. In terms of biological role, involved in the gluconeogenesis. Catalyzes the conversion of oxaloacetate (OAA) to phosphoenolpyruvate (PEP) through direct phosphoryl transfer between the nucleoside triphosphate and OAA. This chain is Phosphoenolpyruvate carboxykinase (ATP), found in Bacillus cereus (strain G9842).